A 138-amino-acid polypeptide reads, in one-letter code: Venom allergen 2 (138 aa).

A signal peptide spans 1–19; sequence MKSFVLATCLLGFAQIIYA.

Belongs to the ant venom allergen 2/4 family. As to quaternary structure, homodimer; disulfide-linked. Expressed by the venom gland.

Its subcellular location is the secreted. In Solenopsis saevissima (Fire ant), this protein is Venom allergen 2.